A 261-amino-acid polypeptide reads, in one-letter code: Cytochrome c oxidase subunit 3 (261 aa).

Residues 1–15 (MAHQAHAYHMVDPSP) lie on the Mitochondrial matrix side of the membrane. The helical transmembrane segment at 16–34 (WPLTGAVAALLLTSGLAVW) threads the bilayer. Residues 35-40 (FHFKSL) are Mitochondrial intermembrane-facing. A helical membrane pass occupies residues 41–66 (TLLAMGLLLMILTMIQWWRDIIREGT). Residues 67 to 72 (FQGHHT) lie on the Mitochondrial matrix side of the membrane. A helical transmembrane segment spans residues 73 to 105 (PPVQKGLRYGMILFITSEVFFFLGFFWAFYHSS). Over 106–128 (LAPTPELGGIWPPTGITPLDPFE) the chain is Mitochondrial intermembrane. A helical membrane pass occupies residues 129-152 (VPLLNTAVLLASGVTVTWTHHSLM). The Mitochondrial matrix portion of the chain corresponds to 153–155 (EGK). The chain crosses the membrane as a helical span at residues 156 to 183 (RTEATQALTLTILLGLYFTALQAMEYYE). Residues 184-190 (APFTIAD) lie on the Mitochondrial intermembrane side of the membrane. A helical membrane pass occupies residues 191–223 (GVYGTTFFVATGFHGLHVIIGSTFLAGCLLRQI). The Mitochondrial matrix portion of the chain corresponds to 224–232 (LYHFTSSHH). Residues 233-256 (FGFEAAAWYWHFVDVVWLFLYVSI) form a helical membrane-spanning segment. Residues 257 to 261 (YWWGS) are Mitochondrial intermembrane-facing.

It belongs to the cytochrome c oxidase subunit 3 family. In terms of assembly, component of the cytochrome c oxidase (complex IV, CIV), a multisubunit enzyme composed of 14 subunits. The complex is composed of a catalytic core of 3 subunits MT-CO1, MT-CO2 and MT-CO3, encoded in the mitochondrial DNA, and 11 supernumerary subunits COX4I, COX5A, COX5B, COX6A, COX6B, COX6C, COX7A, COX7B, COX7C, COX8 and NDUFA4, which are encoded in the nuclear genome. The complex exists as a monomer or a dimer and forms supercomplexes (SCs) in the inner mitochondrial membrane with NADH-ubiquinone oxidoreductase (complex I, CI) and ubiquinol-cytochrome c oxidoreductase (cytochrome b-c1 complex, complex III, CIII), resulting in different assemblies (supercomplex SCI(1)III(2)IV(1) and megacomplex MCI(2)III(2)IV(2)).

Its subcellular location is the mitochondrion inner membrane. It carries out the reaction 4 Fe(II)-[cytochrome c] + O2 + 8 H(+)(in) = 4 Fe(III)-[cytochrome c] + 2 H2O + 4 H(+)(out). Functionally, component of the cytochrome c oxidase, the last enzyme in the mitochondrial electron transport chain which drives oxidative phosphorylation. The respiratory chain contains 3 multisubunit complexes succinate dehydrogenase (complex II, CII), ubiquinol-cytochrome c oxidoreductase (cytochrome b-c1 complex, complex III, CIII) and cytochrome c oxidase (complex IV, CIV), that cooperate to transfer electrons derived from NADH and succinate to molecular oxygen, creating an electrochemical gradient over the inner membrane that drives transmembrane transport and the ATP synthase. Cytochrome c oxidase is the component of the respiratory chain that catalyzes the reduction of oxygen to water. Electrons originating from reduced cytochrome c in the intermembrane space (IMS) are transferred via the dinuclear copper A center (CU(A)) of subunit 2 and heme A of subunit 1 to the active site in subunit 1, a binuclear center (BNC) formed by heme A3 and copper B (CU(B)). The BNC reduces molecular oxygen to 2 water molecules using 4 electrons from cytochrome c in the IMS and 4 protons from the mitochondrial matrix. This chain is Cytochrome c oxidase subunit 3 (mt-co3), found in Polypterus ornatipinnis (Ornate bichir).